A 164-amino-acid chain; its full sequence is Phosphopantetheine adenylyltransferase (164 aa).

Serine 10 contacts substrate. ATP-binding positions include 10–11 (SF) and histidine 18. The substrate site is built by lysine 42, threonine 79, and arginine 93. ATP contacts are provided by residues 94–96 (GLR), glutamate 104, and 129–135 (VRPITAS).

This sequence belongs to the bacterial CoaD family. Homohexamer. Mg(2+) is required as a cofactor.

The protein localises to the cytoplasm. The enzyme catalyses (R)-4'-phosphopantetheine + ATP + H(+) = 3'-dephospho-CoA + diphosphate. It participates in cofactor biosynthesis; coenzyme A biosynthesis; CoA from (R)-pantothenate: step 4/5. Reversibly transfers an adenylyl group from ATP to 4'-phosphopantetheine, yielding dephospho-CoA (dPCoA) and pyrophosphate. In Bradyrhizobium sp. (strain ORS 278), this protein is Phosphopantetheine adenylyltransferase.